Here is a 364-residue protein sequence, read N- to C-terminus: Peptide chain release factor 1 (364 aa).

Gln-230 carries the post-translational modification N5-methylglutamine.

This sequence belongs to the prokaryotic/mitochondrial release factor family. In terms of processing, methylated by PrmC. Methylation increases the termination efficiency of RF1.

The protein resides in the cytoplasm. In terms of biological role, peptide chain release factor 1 directs the termination of translation in response to the peptide chain termination codons UAG and UAA. This Acidothermus cellulolyticus (strain ATCC 43068 / DSM 8971 / 11B) protein is Peptide chain release factor 1.